Here is an 85-residue protein sequence, read N- to C-terminus: MNYLTLIAAASLLTAGTESKKDGYPVKEGDCAFPCGYDNAYCDKLCKERKADSGYCYWGNILCYCYGLPDKAAIKGYGRCRPGKK.

A signal peptide spans 1–19; that stretch reads MNYLTLIAAASLLTAGTES. Residues 21–81 form the LCN-type CS-alpha/beta domain; the sequence is KDGYPVKEGD…AAIKGYGRCR (61 aa). Intrachain disulfides connect C31-C80, C35-C56, C42-C63, and C46-C65. Proline amide is present on P82.

The protein belongs to the long (4 C-C) scorpion toxin superfamily. Sodium channel inhibitor family. Alpha subfamily. In terms of tissue distribution, expressed by the venom gland.

It localises to the secreted. In terms of biological role, alpha toxins bind voltage-independently at site-3 of sodium channels (Nav) and inhibit the inactivation of the activated channels, thereby blocking neuronal transmission. The polypeptide is Toxin TdNa8 (Tityus discrepans (Venezuelan scorpion)).